The chain runs to 417 residues: Leucine-rich repeat-containing protein 42 (417 aa).

LRR repeat units lie at residues Cys167–Leu188, Ser195–Thr215, Lys227–Phe248, and Leu252–Ile273. Residues Phe360 to Gln390 form a disordered region. Over residues Arg362–Glu375 the composition is skewed to basic and acidic residues.

Belongs to the LRRC42 family.

The sequence is that of Leucine-rich repeat-containing protein 42 (lrrc42) from Xenopus laevis (African clawed frog).